We begin with the raw amino-acid sequence, 379 residues long: Cytochrome b (379 aa).

Transmembrane regions (helical) follow at residues 33–53 (FGSL…FLAM), 77–98 (WLIR…FIHV), 113–133 (WNIG…GYVL), and 178–198 (FFAF…VHLL). Heme b contacts are provided by H83 and H97. The heme b site is built by H182 and H196. A ubiquinone is bound at residue H201. A run of 4 helical transmembrane segments spans residues 226 to 246 (IKDL…ALFF), 288 to 308 (LGGV…PLLN), 320 to 340 (ITQT…WIGG), and 347 to 367 (FTMX…ILMP).

Belongs to the cytochrome b family. The cytochrome bc1 complex contains 11 subunits: 3 respiratory subunits (MT-CYB, CYC1 and UQCRFS1), 2 core proteins (UQCRC1 and UQCRC2) and 6 low-molecular weight proteins (UQCRH/QCR6, UQCRB/QCR7, UQCRQ/QCR8, UQCR10/QCR9, UQCR11/QCR10 and a cleavage product of UQCRFS1). This cytochrome bc1 complex then forms a dimer. Heme b is required as a cofactor.

It is found in the mitochondrion inner membrane. Functionally, component of the ubiquinol-cytochrome c reductase complex (complex III or cytochrome b-c1 complex) that is part of the mitochondrial respiratory chain. The b-c1 complex mediates electron transfer from ubiquinol to cytochrome c. Contributes to the generation of a proton gradient across the mitochondrial membrane that is then used for ATP synthesis. In Necromys amoenus (Pleasant bolo mouse), this protein is Cytochrome b (MT-CYB).